Consider the following 681-residue polypeptide: Peroxisomal acyl-coenzyme A oxidase 2 (681 aa).

Residue S9 is modified to Phosphoserine. N6-succinyllysine is present on residues K66, K137, K453, K561, and K667. The short motif at 679–681 (SNL) is the Microbody targeting signal element.

Belongs to the acyl-CoA oxidase family. Homodimer. Requires FAD as cofactor. In terms of tissue distribution, liver and kidney.

It localises to the peroxisome. It carries out the reaction (25R)-3alpha,7alpha,12alpha-trihydroxy-5beta-cholestan-26-oyl-CoA + A + H2O = (24R,25R)-3alpha,7alpha,12alpha,24-tetrahydroxy-5beta-cholestan-26-oyl-CoA + AH2. The enzyme catalyses (25S)-3alpha,7alpha,12alpha-trihydroxy-5beta-cholestan-26-oyl-CoA + O2 = (24E)-3alpha,7alpha,12alpha-trihydroxy-5beta-cholest-24-en-26-oyl-CoA + H2O2. In terms of biological role, oxidizes the CoA esters of the bile acid intermediates di- and tri-hydroxycholestanoic acids. Capable of oxidizing short as well as long chain 2-methyl branched fatty acids. This Oryctolagus cuniculus (Rabbit) protein is Peroxisomal acyl-coenzyme A oxidase 2.